The sequence spans 166 residues: Small ribosomal subunit protein uS5 (166 aa).

The 64-residue stretch at 11 to 74 (LIEKLITVNR…EKARRNMVTV (64 aa)) folds into the S5 DRBM domain.

The protein belongs to the universal ribosomal protein uS5 family. As to quaternary structure, part of the 30S ribosomal subunit. Contacts proteins S4 and S8.

Functionally, with S4 and S12 plays an important role in translational accuracy. Located at the back of the 30S subunit body where it stabilizes the conformation of the head with respect to the body. The protein is Small ribosomal subunit protein uS5 of Idiomarina loihiensis (strain ATCC BAA-735 / DSM 15497 / L2-TR).